The primary structure comprises 805 residues: DNA gyrase subunit B (805 aa).

A Toprim domain is found at 431–546 (CEMYIVEGDS…NECVYIAQPP (116 aa)). Positions 437, 511, and 513 each coordinate Mg(2+).

Belongs to the type II topoisomerase GyrB family. As to quaternary structure, heterotetramer, composed of two GyrA and two GyrB chains. In the heterotetramer, GyrA contains the active site tyrosine that forms a transient covalent intermediate with DNA, while GyrB binds cofactors and catalyzes ATP hydrolysis. Mg(2+) serves as cofactor. The cofactor is Mn(2+). It depends on Ca(2+) as a cofactor.

The protein resides in the cytoplasm. The enzyme catalyses ATP-dependent breakage, passage and rejoining of double-stranded DNA.. A type II topoisomerase that negatively supercoils closed circular double-stranded (ds) DNA in an ATP-dependent manner to modulate DNA topology and maintain chromosomes in an underwound state. Negative supercoiling favors strand separation, and DNA replication, transcription, recombination and repair, all of which involve strand separation. Also able to catalyze the interconversion of other topological isomers of dsDNA rings, including catenanes and knotted rings. Type II topoisomerases break and join 2 DNA strands simultaneously in an ATP-dependent manner. The chain is DNA gyrase subunit B from Chlamydia pneumoniae (Chlamydophila pneumoniae).